Here is a 467-residue protein sequence, read N- to C-terminus: Probable serine hydroxymethyltransferase, cytosolic (467 aa).

K243 carries the post-translational modification N6-(pyridoxal phosphate)lysine.

Belongs to the SHMT family. As to quaternary structure, homotetramer. Requires pyridoxal 5'-phosphate as cofactor.

The protein resides in the cytoplasm. It catalyses the reaction (6R)-5,10-methylene-5,6,7,8-tetrahydrofolate + glycine + H2O = (6S)-5,6,7,8-tetrahydrofolate + L-serine. It participates in one-carbon metabolism; tetrahydrofolate interconversion. Functionally, interconversion of serine and glycine. The sequence is that of Probable serine hydroxymethyltransferase, cytosolic from Schizosaccharomyces pombe (strain 972 / ATCC 24843) (Fission yeast).